The following is a 567-amino-acid chain: WD repeat-containing protein 20 (567 aa).

Ala-2 is modified (N-acetylalanine). WD repeat units lie at residues 147–187, 216–257, 258–297, and 345–389; these read IDKS…GTTA, VGEG…GTMK, SYFG…VIAR, and STQS…LFPH. Residues Ser-355 and Ser-358 each carry the phosphoserine modification. Residues 408–441 are disordered; it reads PAGSNGSAVTTPGNSVPPPLPRSNSLPHSAVSNA. Composition is skewed to polar residues over residues 411–421 and 429–441; these read SNGSAVTTPGN and RSNS…VSNA. Ser-430, Ser-432, and Ser-463 each carry phosphoserine. Basic residues predominate over residues 468–481; sequence KERHHEKDRKRNHS. A disordered region spans residues 468 to 493; sequence KERHHEKDRKRNHSMGHISSKSSDKL. The WD 5 repeat unit spans residues 529-566; it reads IAHERLTVLVFLEDCIVTACQEGFICTWARPGKVSKFQ.

In terms of assembly, interacts with USP12; promotes translocation of USP12/WDR20 to the plasma membrane. Component of the USP12/WDR20/WDR48 deubiquitinating complex. Interacts with USP46; contributes to the cytoplasmic localization of the USP46/WDR20 complex. Component of the USP12/DMWD/WDR48 deubiquitinating complex.

It is found in the cytoplasm. The protein resides in the nucleus. In terms of biological role, regulator of deubiquitinating complexes. Activates deubiquitinating activity of complexes containing USP12. Anchors at the base of the ubiquitin-contacting loop of USP12 and remotely modulates the catalytic center of the enzyme. Regulates shuttling of complexes containing USP12 between the plasma membrane, cytoplasm and nucleus. The polypeptide is WD repeat-containing protein 20 (Wdr20) (Mus musculus (Mouse)).